The sequence spans 181 residues: Inner membrane-spanning protein YciB (181 aa).

Transmembrane regions (helical) follow at residues isoleucine 22–phenylalanine 42, methionine 50–aspartate 70, alanine 72–serine 92, valine 118–phenylalanine 138, and phenylalanine 148–isoleucine 168.

The protein belongs to the YciB family.

It localises to the cell inner membrane. Plays a role in cell envelope biogenesis, maintenance of cell envelope integrity and membrane homeostasis. The protein is Inner membrane-spanning protein YciB of Shewanella denitrificans (strain OS217 / ATCC BAA-1090 / DSM 15013).